A 307-amino-acid polypeptide reads, in one-letter code: Elongation factor Ts (307 aa).

The interval 80-83 (TDFV) is involved in Mg(2+) ion dislocation from EF-Tu.

It belongs to the EF-Ts family.

It is found in the cytoplasm. Its function is as follows. Associates with the EF-Tu.GDP complex and induces the exchange of GDP to GTP. It remains bound to the aminoacyl-tRNA.EF-Tu.GTP complex up to the GTP hydrolysis stage on the ribosome. This Zymomonas mobilis subsp. mobilis (strain ATCC 31821 / ZM4 / CP4) protein is Elongation factor Ts (tsf).